A 788-amino-acid chain; its full sequence is Protein translocase subunit SecA 2 (788 aa).

ATP-binding positions include Gln-86, 104-108 (GEGKT), and Asp-493.

The protein belongs to the SecA family. In terms of assembly, monomer and homodimer. Part of the essential Sec protein translocation apparatus which comprises SecA, SecYEG and auxiliary proteins SecDF. Other proteins may also be involved.

The protein resides in the cell membrane. Its subcellular location is the cytoplasm. The enzyme catalyses ATP + H2O + cellular proteinSide 1 = ADP + phosphate + cellular proteinSide 2.. Its function is as follows. Part of the Sec protein translocase complex. Interacts with the SecYEG preprotein conducting channel. Has a central role in coupling the hydrolysis of ATP to the transfer of proteins into and across the cell membrane, serving as an ATP-driven molecular motor driving the stepwise translocation of polypeptide chains across the membrane. This Bacillus thuringiensis (strain Al Hakam) protein is Protein translocase subunit SecA 2.